We begin with the raw amino-acid sequence, 218 residues long: Small ribosomal subunit protein uS3c (218 aa).

The KH type-2 domain occupies 47–118 (VQKHMRISSG…RLNIAIARVP (72 aa)).

Belongs to the universal ribosomal protein uS3 family. As to quaternary structure, part of the 30S ribosomal subunit.

It is found in the plastid. It localises to the chloroplast. The chain is Small ribosomal subunit protein uS3c (rps3) from Nuphar advena (Common spatterdock).